Reading from the N-terminus, the 83-residue chain is U20-theraphotoxin-Cg1a 1 (83 aa).

Residues 1 to 21 form the signal peptide; that stretch reads MKVSVLITLAVLGVMFVWTSA. A propeptide spanning residues 22–47 is cleaved from the precursor; the sequence is AELEERGSDQPAWLKSLERIFQSEER. 3 cysteine pairs are disulfide-bonded: Cys-49–Cys-63, Cys-56–Cys-68, and Cys-62–Cys-76.

This sequence belongs to the neurotoxin 10 (Hwtx-1) family. 40 (Jztx-35) subfamily. As to expression, expressed by the venom gland.

Its subcellular location is the secreted. Probable ion channel inhibitor. This chain is U20-theraphotoxin-Cg1a 1, found in Chilobrachys guangxiensis (Chinese earth tiger tarantula).